The sequence spans 879 residues: Phosphoenolpyruvate carboxylase (879 aa).

Catalysis depends on residues His-138 and Lys-545.

This sequence belongs to the PEPCase type 1 family. Mg(2+) serves as cofactor.

The enzyme catalyses oxaloacetate + phosphate = phosphoenolpyruvate + hydrogencarbonate. Forms oxaloacetate, a four-carbon dicarboxylic acid source for the tricarboxylic acid cycle. The polypeptide is Phosphoenolpyruvate carboxylase (Haemophilus influenzae (strain PittEE)).